A 478-amino-acid chain; its full sequence is Pathogenicity cluster 5 protein d (478 aa).

The signal sequence occupies residues 1-19; sequence MQIQNLIAALAGMAVVAEA. Disordered stretches follow at residues 35 to 89 and 299 to 400; these read RQNK…GQAN and NGGK…GGKG. Residues 38-64 are compositionally biased toward low complexity; it reads KGGNNNNNNNNNNNNNNNNNKNNGGNN. Residues 65 to 89 are compositionally biased toward polar residues; it reads QLCLNPNNVQKGSQQAGTPKQGQAN. A compositionally biased stretch (gly residues) spans 316-326; it reads NNDGGGGGNDG. Low complexity-rich tracts occupy residues 327 to 348 and 379 to 393; these read GNNS…QNGA and TQAG…TNGN. N-linked (GlcNAc...) asparagine glycans are attached at residues N328 and N332.

Its subcellular location is the secreted. Secreted protein required for appressorial penetration of intact host epidermal cells and for pathogenicit, but not for subsequent biotrophic and necrotrophic colonization of leaves. This chain is Pathogenicity cluster 5 protein d, found in Colletotrichum graminicola (strain M1.001 / M2 / FGSC 10212) (Maize anthracnose fungus).